Consider the following 324-residue polypeptide: Quinolinate synthase (324 aa).

Iminosuccinate is bound by residues His-39 and Ser-56. Residue Cys-101 coordinates [4Fe-4S] cluster. Residues 127–129 (YIN) and Ser-144 contribute to the iminosuccinate site. A [4Fe-4S] cluster-binding site is contributed by Cys-187. Residues 213–215 (HPE) and Thr-230 contribute to the iminosuccinate site. Cys-280 lines the [4Fe-4S] cluster pocket.

The protein belongs to the quinolinate synthase family. Type 2 subfamily. It depends on [4Fe-4S] cluster as a cofactor.

The protein resides in the cytoplasm. The enzyme catalyses iminosuccinate + dihydroxyacetone phosphate = quinolinate + phosphate + 2 H2O + H(+). It participates in cofactor biosynthesis; NAD(+) biosynthesis; quinolinate from iminoaspartate: step 1/1. Its function is as follows. Catalyzes the condensation of iminoaspartate with dihydroxyacetone phosphate to form quinolinate. The protein is Quinolinate synthase of Nostoc punctiforme (strain ATCC 29133 / PCC 73102).